Reading from the N-terminus, the 446-residue chain is Glucose-1-phosphate adenylyltransferase (446 aa).

Alpha-D-glucose 1-phosphate is bound by residues Y119, G184, 199-200 (EK), and S217.

It belongs to the bacterial/plant glucose-1-phosphate adenylyltransferase family. In terms of assembly, homotetramer.

It carries out the reaction alpha-D-glucose 1-phosphate + ATP + H(+) = ADP-alpha-D-glucose + diphosphate. It functions in the pathway glycan biosynthesis; glycogen biosynthesis. Involved in the biosynthesis of ADP-glucose, a building block required for the elongation reactions to produce glycogen. Catalyzes the reaction between ATP and alpha-D-glucose 1-phosphate (G1P) to produce pyrophosphate and ADP-Glc. The sequence is that of Glucose-1-phosphate adenylyltransferase from Rhodopirellula baltica (strain DSM 10527 / NCIMB 13988 / SH1).